We begin with the raw amino-acid sequence, 398 residues long: Serine/threonine-protein phosphatase 2A activator (398 aa).

ATP is bound by residues arginine 137, threonine 142, and glycine 143. 2 residues coordinate Mg(2+): glycine 197 and aspartate 203. The ATP site is built by proline 293, glutamine 296, and histidine 297. The segment covering 343 to 352 has biased composition (pro residues); it reads PVATAPPPPA. The interval 343–398 is disordered; sequence PVATAPPPPAESLSIEQNVGDSSSESSDNSVVLRPSTSSSSLVAAAEGSGDKPSKE. Positions 363 to 388 are enriched in low complexity; sequence DSSSESSDNSVVLRPSTSSSSLVAAA.

The protein belongs to the PTPA-type PPIase family. As to quaternary structure, associates with PP2A heterodimeric core enzyme PP2A(D), composed of a catalytic subunit (subunit C) and a constant regulatory subunit (PR65 or subunit A). Interacts with the catalytic subunit Pp4-19C of the serine/threonine-protein phosphatase 4 (PP4) complex; thereby mediating basal localization of the Miranda (Mira) complex; probably by facilitating the dephosphorylation of Mira.

It localises to the cytoplasm. It is found in the nucleus. It carries out the reaction [protein]-peptidylproline (omega=180) = [protein]-peptidylproline (omega=0). Its function is as follows. PPIases accelerate the folding of proteins. It catalyzes the cis-trans isomerization of proline imidic peptide bonds in oligopeptides. Acts as a regulatory subunit for serine/threonine-protein phosphatase 2A (PP2A). Modulates PP2A activity or substrate specificity, probably by inducing a conformational change in the catalytic subunit, a proposed direct target of the PPIase. Acts as mediator for the basal localization of the Miranda (Mira) complex during mitosis of larval neuroblast asymmetric division. Associates with the phosphatase 4 (PP4) complex to mediate basal localization of Mira; probably by facilitating the dephosphorylation of Mira. Cortical association of Mira mediated by the PTPA-PP4 complex seems to be independent of aPKC activity. This chain is Serine/threonine-protein phosphatase 2A activator, found in Drosophila melanogaster (Fruit fly).